Reading from the N-terminus, the 406-residue chain is Probable 2,3-bisphosphoglycerate-independent phosphoglycerate mutase (406 aa).

This sequence belongs to the BPG-independent phosphoglycerate mutase family. A-PGAM subfamily.

The enzyme catalyses (2R)-2-phosphoglycerate = (2R)-3-phosphoglycerate. It participates in carbohydrate degradation; glycolysis; pyruvate from D-glyceraldehyde 3-phosphate: step 3/5. Its function is as follows. Catalyzes the interconversion of 2-phosphoglycerate and 3-phosphoglycerate. The sequence is that of Probable 2,3-bisphosphoglycerate-independent phosphoglycerate mutase from Thermus thermophilus (strain ATCC 27634 / DSM 579 / HB8).